Reading from the N-terminus, the 216-residue chain is Germin-like protein 1-1 (216 aa).

An N-terminal signal peptide occupies residues Met1–Ala24. Cys34 and Cys49 are joined by a disulfide. Asn52 and Asn76 each carry an N-linked (GlcNAc...) asparagine glycan. The region spanning Ala61–Asp209 is the Cupin type-1 domain. 4 residues coordinate Mn(2+): His109, His111, Glu116, and His155.

It belongs to the germin family. As to quaternary structure, oligomer (believed to be a pentamer but probably hexamer).

The protein localises to the secreted. It is found in the extracellular space. It localises to the apoplast. Its function is as follows. May play a role in plant defense. Probably has no oxalate oxidase activity even if the active site is conserved. The protein is Germin-like protein 1-1 (GER4) of Oryza sativa subsp. japonica (Rice).